A 200-amino-acid chain; its full sequence is Thymidylate kinase (200 aa).

Position 10-17 (10-17 (GIDGAGKS)) interacts with ATP.

The protein belongs to the thymidylate kinase family.

It catalyses the reaction dTMP + ATP = dTDP + ADP. Its function is as follows. Phosphorylation of dTMP to form dTDP in both de novo and salvage pathways of dTTP synthesis. This is Thymidylate kinase from Cupriavidus metallidurans (strain ATCC 43123 / DSM 2839 / NBRC 102507 / CH34) (Ralstonia metallidurans).